Reading from the N-terminus, the 842-residue chain is Protein translocase subunit SecA (842 aa).

ATP contacts are provided by residues glutamine 91, 109 to 113, and aspartate 498; that span reads GEGKT. Residues 798-824 are compositionally biased toward basic and acidic residues; that stretch reads QGQHVSAEDGKEKVKPQPVVKDNHIGR. The disordered stretch occupies residues 798 to 827; it reads QGQHVSAEDGKEKVKPQPVVKDNHIGRNDP. Zn(2+)-binding residues include cysteine 828, cysteine 830, cysteine 839, and cysteine 840.

It belongs to the SecA family. In terms of assembly, monomer and homodimer. Part of the essential Sec protein translocation apparatus which comprises SecA, SecYEG and auxiliary proteins SecDF. Other proteins may also be involved. Zn(2+) serves as cofactor.

It localises to the cell membrane. It is found in the cytoplasm. The enzyme catalyses ATP + H2O + cellular proteinSide 1 = ADP + phosphate + cellular proteinSide 2.. Functionally, part of the Sec protein translocase complex. Interacts with the SecYEG preprotein conducting channel. Has a central role in coupling the hydrolysis of ATP to the transfer of proteins into and across the cell membrane, serving as an ATP-driven molecular motor driving the stepwise translocation of polypeptide chains across the membrane. This is Protein translocase subunit SecA from Staphylococcus carnosus (strain TM300).